Consider the following 880-residue polypeptide: Translation initiation factor IF-2 (880 aa).

Composition is skewed to basic and acidic residues over residues 34–43 (HMSSLDDKQV), 59–69 (TEKDSKNSSRK), 82–94 (RRRD…DNRH), 110–131 (NRRE…DLLN), 167–181 (KKVE…EKLE), 230–240 (QKEETKPTRKK), and 248–261 (EVPD…EHSD). The interval 34–297 (HMSSLDDKQV…KERPLPETLV (264 aa)) is disordered. Over residues 262–275 (KARRRRNKKNKRIN) the composition is skewed to basic residues. Residues 276-292 (QSKEVKKQPTQRKERPL) are compositionally biased toward basic and acidic residues. In terms of domain architecture, tr-type G spans 381 to 550 (KRPPVVTIMG…LLQADVMELK (170 aa)). Residues 390-397 (GHVDHGKT) form a G1 region. GTP is bound at residue 390–397 (GHVDHGKT). Residues 415-419 (GITQR) are G2. The interval 436–439 (DTPG) is G3. GTP contacts are provided by residues 436–440 (DTPGH) and 490–493 (NKID). Positions 490–493 (NKID) are G4. The segment at 526-528 (SAK) is G5.

The protein belongs to the TRAFAC class translation factor GTPase superfamily. Classic translation factor GTPase family. IF-2 subfamily.

The protein localises to the cytoplasm. One of the essential components for the initiation of protein synthesis. Protects formylmethionyl-tRNA from spontaneous hydrolysis and promotes its binding to the 30S ribosomal subunits. Also involved in the hydrolysis of GTP during the formation of the 70S ribosomal complex. The polypeptide is Translation initiation factor IF-2 (Lactobacillus johnsonii (strain CNCM I-12250 / La1 / NCC 533)).